A 379-amino-acid polypeptide reads, in one-letter code: tRNA-specific 2-thiouridylase MnmA (379 aa).

ATP contacts are provided by residues 9–16 (AMSGGVDS) and Met-35. The interval 94–96 (NPD) is interaction with target base in tRNA. Cys-99 functions as the Nucleophile in the catalytic mechanism. Cysteines 99 and 195 form a disulfide. ATP is bound at residue Gly-123. The segment at 145 to 147 (KDQ) is interaction with tRNA. The active-site Cysteine persulfide intermediate is Cys-195. The segment at 307 to 308 (RY) is interaction with tRNA.

It belongs to the MnmA/TRMU family.

The protein localises to the cytoplasm. It catalyses the reaction S-sulfanyl-L-cysteinyl-[protein] + uridine(34) in tRNA + AH2 + ATP = 2-thiouridine(34) in tRNA + L-cysteinyl-[protein] + A + AMP + diphosphate + H(+). Its function is as follows. Catalyzes the 2-thiolation of uridine at the wobble position (U34) of tRNA, leading to the formation of s(2)U34. This is tRNA-specific 2-thiouridylase MnmA from Xylella fastidiosa (strain M23).